The sequence spans 742 residues: Zinc finger protein 280C (742 aa).

Residues Lys-10, Lys-23, Lys-42, Lys-65, Lys-85, Lys-123, and Lys-135 each participate in a glycyl lysine isopeptide (Lys-Gly) (interchain with G-Cter in SUMO2) cross-link. Residues 138 to 168 show a composition bias toward polar residues; sequence FTKTSPQEDSGACSVSQSDSTQDIPSSNILQ. The disordered stretch occupies residues 138-243; it reads FTKTSPQEDS…QSAPGSSSLR (106 aa). Glycyl lysine isopeptide (Lys-Gly) (interchain with G-Cter in SUMO2) cross-links involve residues Lys-180, Lys-186, and Lys-193. Residues 182–191 are compositionally biased toward polar residues; it reads PSTSKVNSVN. Low complexity predominate over residues 200 to 222; that stretch reads SISETRPCSSSSSQTAPSGASSQ. A compositionally biased stretch (polar residues) spans 223–243; sequence TVLSNVNTSSVQSAPGSSSLR. 5 consecutive C2H2-type zinc fingers follow at residues 323-345, 360-383, 390-413, 420-443, and 477-499; these read FKCFSCTKVLKNNIRFMNHMKHH, TTCQHCYRQYPNPFQLQCHIESTH, TICKICELSFETEHMLLQHMKDTH, YICQVCQFRSSIFSDVETHFRSSH, and YRCPKCRLQFLTSKEKTEHKLEH. A compositionally biased stretch (low complexity) spans 523–578; the sequence is LGSSQSRASSPPSSTIPSTSLQLSVPKSKSTTTKNNSKVSANKATTTSPQTVATTT. The interval 523-608 is disordered; that stretch reads LGSSQSRASS…YKQKRQRTRK (86 aa). Positions 579–592 are enriched in polar residues; the sequence is GKPSASKPGTGTTK. Lys-580 is covalently cross-linked (Glycyl lysine isopeptide (Lys-Gly) (interchain with G-Cter in SUMO2)). Basic residues predominate over residues 593-608; sequence SKAKPSYKQKRQRTRK.

The protein localises to the nucleus. In terms of biological role, may function as a transcription factor. The chain is Zinc finger protein 280C (Znf280c) from Mus musculus (Mouse).